A 215-amino-acid chain; its full sequence is ATP phosphoribosyltransferase (215 aa).

This sequence belongs to the ATP phosphoribosyltransferase family. Short subfamily. Heteromultimer composed of HisG and HisZ subunits.

It localises to the cytoplasm. It catalyses the reaction 1-(5-phospho-beta-D-ribosyl)-ATP + diphosphate = 5-phospho-alpha-D-ribose 1-diphosphate + ATP. The protein operates within amino-acid biosynthesis; L-histidine biosynthesis; L-histidine from 5-phospho-alpha-D-ribose 1-diphosphate: step 1/9. Catalyzes the condensation of ATP and 5-phosphoribose 1-diphosphate to form N'-(5'-phosphoribosyl)-ATP (PR-ATP). Has a crucial role in the pathway because the rate of histidine biosynthesis seems to be controlled primarily by regulation of HisG enzymatic activity. The chain is ATP phosphoribosyltransferase (hisG) from Clostridium acetobutylicum (strain ATCC 824 / DSM 792 / JCM 1419 / IAM 19013 / LMG 5710 / NBRC 13948 / NRRL B-527 / VKM B-1787 / 2291 / W).